A 401-amino-acid polypeptide reads, in one-letter code: 1-deoxy-D-xylulose 5-phosphate reductoisomerase (401 aa).

Positions 10, 11, 12, 13, 36, 38, and 124 each coordinate NADPH. Lys125 serves as a coordination point for 1-deoxy-D-xylulose 5-phosphate. Glu126 is a binding site for NADPH. Mn(2+) is bound at residue Asp150. 1-deoxy-D-xylulose 5-phosphate-binding residues include Ser151, Glu152, Ser186, and His209. Glu152 provides a ligand contact to Mn(2+). Gly215 provides a ligand contact to NADPH. Residues Ser222, Asn227, Lys228, and Glu231 each contribute to the 1-deoxy-D-xylulose 5-phosphate site. Glu231 is a binding site for Mn(2+).

It belongs to the DXR family. The cofactor is Mg(2+). It depends on Mn(2+) as a cofactor.

The enzyme catalyses 2-C-methyl-D-erythritol 4-phosphate + NADP(+) = 1-deoxy-D-xylulose 5-phosphate + NADPH + H(+). It participates in isoprenoid biosynthesis; isopentenyl diphosphate biosynthesis via DXP pathway; isopentenyl diphosphate from 1-deoxy-D-xylulose 5-phosphate: step 1/6. Its function is as follows. Catalyzes the NADPH-dependent rearrangement and reduction of 1-deoxy-D-xylulose-5-phosphate (DXP) to 2-C-methyl-D-erythritol 4-phosphate (MEP). In Vibrio parahaemolyticus serotype O3:K6 (strain RIMD 2210633), this protein is 1-deoxy-D-xylulose 5-phosphate reductoisomerase.